The chain runs to 310 residues: Methionyl-tRNA formyltransferase (310 aa).

Position 108-111 (108-111) interacts with (6S)-5,6,7,8-tetrahydrofolate; sequence SLLP.

The protein belongs to the Fmt family.

The catalysed reaction is L-methionyl-tRNA(fMet) + (6R)-10-formyltetrahydrofolate = N-formyl-L-methionyl-tRNA(fMet) + (6S)-5,6,7,8-tetrahydrofolate + H(+). Functionally, attaches a formyl group to the free amino group of methionyl-tRNA(fMet). The formyl group appears to play a dual role in the initiator identity of N-formylmethionyl-tRNA by promoting its recognition by IF2 and preventing the misappropriation of this tRNA by the elongation apparatus. The sequence is that of Methionyl-tRNA formyltransferase from Fusobacterium nucleatum subsp. nucleatum (strain ATCC 25586 / DSM 15643 / BCRC 10681 / CIP 101130 / JCM 8532 / KCTC 2640 / LMG 13131 / VPI 4355).